The following is a 345-amino-acid chain: MIILDNRFVTPLSIEEDIDIEYNLRPTQLEEYIGQSKVREKLRIFIKAAKNRGESLDHVLLYGPPGLGKTTLANIIAKEMKGNLKITSGPAIERAGDLAAILTTLNEHDVLFIDEIHRLNRAVEEILYPAMEDYALDIVIGKGAAAKSIRLDLPHFTLIGATTRVGLLTAPLRDRFGVLCPMEFYNEEELKDIIVRSSKILNVKTEEEAAYELARRSRGTPRIANRILKRVRDYSEVMGDGIIDLNMTNKALNLLEIDKEGFDSIDTKILKAILDNFNGGPVGLETLAYFIGEELDTIEDVYEPYLLQKGFIMRTPRGRVATEKTYKHFKREIKKENINQYKFKI.

The large ATPase domain (RuvB-L) stretch occupies residues 4-185 (LDNRFVTPLS…FGVLCPMEFY (182 aa)). Residues Leu-24, Arg-25, Gly-66, Lys-69, Thr-70, Thr-71, 132-134 (EDY), Arg-175, Tyr-185, and Arg-222 contribute to the ATP site. Residue Thr-70 coordinates Mg(2+). Residues 186 to 256 (NEEELKDIIV…MTNKALNLLE (71 aa)) are small ATPAse domain (RuvB-S). The head domain (RuvB-H) stretch occupies residues 259 to 345 (KEGFDSIDTK…ENINQYKFKI (87 aa)). Residues Arg-314 and Arg-319 each contribute to the DNA site.

The protein belongs to the RuvB family. In terms of assembly, homohexamer. Forms an RuvA(8)-RuvB(12)-Holliday junction (HJ) complex. HJ DNA is sandwiched between 2 RuvA tetramers; dsDNA enters through RuvA and exits via RuvB. An RuvB hexamer assembles on each DNA strand where it exits the tetramer. Each RuvB hexamer is contacted by two RuvA subunits (via domain III) on 2 adjacent RuvB subunits; this complex drives branch migration. In the full resolvosome a probable DNA-RuvA(4)-RuvB(12)-RuvC(2) complex forms which resolves the HJ.

The protein localises to the cytoplasm. It catalyses the reaction ATP + H2O = ADP + phosphate + H(+). Its function is as follows. The RuvA-RuvB-RuvC complex processes Holliday junction (HJ) DNA during genetic recombination and DNA repair, while the RuvA-RuvB complex plays an important role in the rescue of blocked DNA replication forks via replication fork reversal (RFR). RuvA specifically binds to HJ cruciform DNA, conferring on it an open structure. The RuvB hexamer acts as an ATP-dependent pump, pulling dsDNA into and through the RuvAB complex. RuvB forms 2 homohexamers on either side of HJ DNA bound by 1 or 2 RuvA tetramers; 4 subunits per hexamer contact DNA at a time. Coordinated motions by a converter formed by DNA-disengaged RuvB subunits stimulates ATP hydrolysis and nucleotide exchange. Immobilization of the converter enables RuvB to convert the ATP-contained energy into a lever motion, pulling 2 nucleotides of DNA out of the RuvA tetramer per ATP hydrolyzed, thus driving DNA branch migration. The RuvB motors rotate together with the DNA substrate, which together with the progressing nucleotide cycle form the mechanistic basis for DNA recombination by continuous HJ branch migration. Branch migration allows RuvC to scan DNA until it finds its consensus sequence, where it cleaves and resolves cruciform DNA. This Clostridium tetani (strain Massachusetts / E88) protein is Holliday junction branch migration complex subunit RuvB.